A 190-amino-acid chain; its full sequence is uncharacterized protein (190 aa).

Positions M1–M58 constitute an HTH tetR-type domain. The H-T-H motif DNA-binding region spans T21–Y40.

This is an uncharacterized protein from Bacillus subtilis (strain 168).